Here is a 771-residue protein sequence, read N- to C-terminus: Phosphoglycerate kinase (771 aa).

Residues 1–406 (MKKLITDLNL…PGIDAIQNYE (406 aa)) form a phosphoglycerate kinase region. Substrate contacts are provided by residues 20–22 (DLN), arginine 35, 58–61 (HLGR), arginine 118, and arginine 155. Residues lysine 206, glycine 295, glutamate 334, and 361–364 (GGDS) each bind ATP. The segment at 407 to 771 (QTYEQYDSQV…KRFWFFGRKR (365 aa)) is unknown.

It in the N-terminal section; belongs to the phosphoglycerate kinase family. As to quaternary structure, monomer.

The protein localises to the cytoplasm. It catalyses the reaction (2R)-3-phosphoglycerate + ATP = (2R)-3-phospho-glyceroyl phosphate + ADP. It functions in the pathway carbohydrate degradation; glycolysis; pyruvate from D-glyceraldehyde 3-phosphate: step 2/5. In Mycoplasmopsis pulmonis (strain UAB CTIP) (Mycoplasma pulmonis), this protein is Phosphoglycerate kinase (pgk).